The following is a 329-amino-acid chain: Short-chain dehydrogenase/reductase prx4 (329 aa).

3 residues coordinate NADP(+): Ser58, Ile60, and Asn81. The N-linked (GlcNAc...) asparagine glycan is linked to Asn91. The NADP(+) site is built by Asp98, Asn121, Lys161, Tyr194, Lys198, and Thr229. Tyr194 functions as the Proton acceptor in the catalytic mechanism. Lys198 (lowers pKa of active site Tyr) is an active-site residue. Residues Gly238 to Val258 traverse the membrane as a helical segment.

The protein belongs to the short-chain dehydrogenases/reductases (SDR) family.

The protein resides in the membrane. The protein operates within sesquiterpene biosynthesis. Short-chain dehydrogenase/reductase; part of the gene cluster that mediates the biosynthesis of PR-toxin, a bicyclic sesquiterpene belonging to the eremophilane class and acting as a mycotoxin. The first step of the pathway is catalyzed by the aristolochene synthase which performs the cyclization of trans,trans-farnesyl diphosphate (FPP) to the bicyclic sesquiterpene aristolochene. Following the formation of aristolochene, the non-oxygenated aristolochene is converted to the trioxygenated intermediate eremofortin B, via 7-epi-neopetasone. This conversion appears to involve three enzymes, a hydroxysterol oxidase-like enzyme, the quinone-oxidase prx3 that forms the quinone-type-structure in the bicyclic nucleus of aristolochene with the C8-oxo group and the C-3 hydroxyl group, and the P450 monooxygenase ORF6 that introduces the epoxide at the double bond between carbons 1 and 2. No monoxy or dioxy-intermediates have been reported to be released to the broth, so these three early oxidative reactions may be coupled together. Eremofortin B is further oxidized by another P450 monooxygenase, that introduces a second epoxide between carbons 7 and 11 prior to acetylation to eremofortin A by the acetyltransferase ORF8. The second epoxidation may be performed by a second P450 monooxygenase. After the acetylation step, eremofortin A is converted to eremofortin C and then to PR-toxin. First the conversion of eremofortin A to eremofortin C proceeds by oxidation of the side chain of the molecule at C-12 and is catalyzed by the short-chain oxidoreductase prx1. The cytochrome P450 monooxygenase ORF6 is probably also involved in this step. The primary alcohol formed at C-12 is finally oxidized by the short-chain alcohol dehydrogenase prx4 that forms PR-toxin. In Penicillium roqueforti, this protein is Short-chain dehydrogenase/reductase prx4.